The sequence spans 371 residues: 4-hydroxy-3-methylbut-2-en-1-yl diphosphate synthase (flavodoxin) (371 aa).

[4Fe-4S] cluster contacts are provided by Cys270, Cys273, Cys305, and Glu312.

Belongs to the IspG family. Requires [4Fe-4S] cluster as cofactor.

The catalysed reaction is (2E)-4-hydroxy-3-methylbut-2-enyl diphosphate + oxidized [flavodoxin] + H2O + 2 H(+) = 2-C-methyl-D-erythritol 2,4-cyclic diphosphate + reduced [flavodoxin]. The protein operates within isoprenoid biosynthesis; isopentenyl diphosphate biosynthesis via DXP pathway; isopentenyl diphosphate from 1-deoxy-D-xylulose 5-phosphate: step 5/6. Its function is as follows. Converts 2C-methyl-D-erythritol 2,4-cyclodiphosphate (ME-2,4cPP) into 1-hydroxy-2-methyl-2-(E)-butenyl 4-diphosphate. The sequence is that of 4-hydroxy-3-methylbut-2-en-1-yl diphosphate synthase (flavodoxin) from Shewanella woodyi (strain ATCC 51908 / MS32).